The chain runs to 195 residues: MSRLLVLKSSILGDYSQSNKLVDEFINHFDQQQIVVRDLAQQPLPVLDFQVATALRAAGELTAEQQAIVTLSDTLIDEIKAADTLVIAAPMYNFTIPTQLKNWIDLIARAGVTFTYTEQGPKGLIEGKKAVIVTTRGGIHKDAASDIITPYLKTVLGFVGITEVEFVYAEALNMGDDFANKGLASASEHLAALTA.

Residues S10, 16–18, 91–94, and 135–138 contribute to the FMN site; these read SQS, MYNF, and TRGG.

Belongs to the azoreductase type 1 family. As to quaternary structure, homodimer. FMN is required as a cofactor.

It carries out the reaction 2 a quinone + NADH + H(+) = 2 a 1,4-benzosemiquinone + NAD(+). The catalysed reaction is N,N-dimethyl-1,4-phenylenediamine + anthranilate + 2 NAD(+) = 2-(4-dimethylaminophenyl)diazenylbenzoate + 2 NADH + 2 H(+). Functionally, quinone reductase that provides resistance to thiol-specific stress caused by electrophilic quinones. In terms of biological role, also exhibits azoreductase activity. Catalyzes the reductive cleavage of the azo bond in aromatic azo compounds to the corresponding amines. In Vibrio vulnificus (strain YJ016), this protein is FMN-dependent NADH:quinone oxidoreductase.